The primary structure comprises 383 residues: tRNA(Met) cytidine acetate ligase (383 aa).

ATP-binding positions include 7–20 (ITEY…HRYH), Gly101, Asn150, and Arg175.

Belongs to the TmcAL family.

It is found in the cytoplasm. The catalysed reaction is cytidine(34) in elongator tRNA(Met) + acetate + ATP = N(4)-acetylcytidine(34) in elongator tRNA(Met) + AMP + diphosphate. Functionally, catalyzes the formation of N(4)-acetylcytidine (ac(4)C) at the wobble position of elongator tRNA(Met), using acetate and ATP as substrates. First activates an acetate ion to form acetyladenylate (Ac-AMP) and then transfers the acetyl group to tRNA to form ac(4)C34. This Lactiplantibacillus plantarum (strain ATCC BAA-793 / NCIMB 8826 / WCFS1) (Lactobacillus plantarum) protein is tRNA(Met) cytidine acetate ligase.